The chain runs to 341 residues: GTPase Obg (341 aa).

The region spanning 1–159 is the Obg domain; sequence MKFLDQAKVY…RAIWLRLKLI (159 aa). The OBG-type G domain maps to 160–327; that stretch reads ADAGLVGLPN…VLRAGAHIIE (168 aa). GTP-binding positions include 166-173, 191-195, 212-215, 279-282, and 308-310; these read GLPNAGKS, FTTLH, DIPG, SQID, and SAV. Mg(2+) is bound by residues Ser-173 and Thr-193.

Belongs to the TRAFAC class OBG-HflX-like GTPase superfamily. OBG GTPase family. In terms of assembly, monomer. The cofactor is Mg(2+).

Its subcellular location is the cytoplasm. Functionally, an essential GTPase which binds GTP, GDP and possibly (p)ppGpp with moderate affinity, with high nucleotide exchange rates and a fairly low GTP hydrolysis rate. Plays a role in control of the cell cycle, stress response, ribosome biogenesis and in those bacteria that undergo differentiation, in morphogenesis control. In Bartonella tribocorum (strain CIP 105476 / IBS 506), this protein is GTPase Obg.